We begin with the raw amino-acid sequence, 608 residues long: MEMESTAASTRFHQPHMERKMSAMTCEIFNELRLEGKLCDVVIKVNGFEFNAHKNILCSCSSYFRALFTSGWNNTEKKVYNIPGISPDMMKLIIEYAYTRTVPITPDNVEKLLAAADQFNIMGIVRGCCEFLKSELCLDNCIGICKFTDYYYCPELRQKAYMFILHNFEEMVKVSAEFLELSVTELKDIIEKDELNVKQEDAVFEAILKWISHDPQNRKQHISVLLPKVRLALMHAEYFMNNVKMNDYVKDSEECKPVIINALKAMYDLNMNGPSNSDFTNPLTRPRLPYAILFAIGGWSGGSPTNAIEAYDARADRWVNVTCEEESPRAYHGAAYLKGYVYIIGGFDSVDYFNSVKRFDPVKKTWHQVAPMHSRRCYVSVTVLSNFIYAMGGFDGYVRLNTAERYEPETNQWTLIAPMHEQRSDASATTLYGKVYICGGFNGNECLFTAEVYNTESNQWTVIAPMRSRRSGIGVIAYGEHVYAVGGFDGANRLRSAEAYSPVANTWRTIPTMFNPRSNFGIEVVDDLLFVVGGFNGFTTTFNVECYDEKTDEWYDAHDMSIYRSALSCCVVPGLANVGEYAARRDNFTGLALRDEVKYSASTSTLPV.

Residues 39–106 (CDVVIKVNGF…AYTRTVPITP (68 aa)) enclose the BTB domain. Kelch repeat units follow at residues 292–339 (ILFA…YLKG), 340–386 (YVYI…VLSN), 388–433 (IYAM…TLYG), 434–480 (KVYI…AYGE), 481–527 (HVYA…VVDD), and 529–574 (LFVV…VVPG). Residue S501 is modified to Phosphoserine.

Self-associates. Interacts with CUL3; indicative for the participation in an E3 ubiquitin ligase complex. As to expression, testis specific.

The protein resides in the cytoplasm. It functions in the pathway protein modification; protein ubiquitination. Functionally, may be a substrate-specific adapter of a CUL3-based E3 ubiquitin-protein ligase complex which mediates the ubiquitination and subsequent proteasomal degradation of target proteins during spermatogenesis. Required for male fertility. In Mus musculus (Mouse), this protein is Kelch-like protein 10 (Klhl10).